A 289-amino-acid polypeptide reads, in one-letter code: Tumor necrosis factor receptor superfamily member 5 (289 aa).

The signal sequence occupies residues 1-19; the sequence is MVSLPRLCALWGCLLTAVH. Topologically, residues 20 to 193 are extracellular; the sequence is LGQCVTCSDK…VICGLKSRMR (174 aa). 4 TNFR-Cys repeats span residues 25 to 60, 61 to 103, 104 to 144, and 145 to 187; these read TCSD…TQCH, PCDS…DTVC, TCKE…TVCH, and PCPV…VICG. Disulfide bonds link C26–C37, C38–C51, C41–C59, C62–C77, C83–C103, C105–C119, C111–C116, and C125–C143. A glycan (N-linked (GlcNAc...) asparagine) is linked at N153. The chain crosses the membrane as a helical span at residues 194 to 215; sequence ALLVIPVVMGILITIFGVFLYI. The Cytoplasmic segment spans residues 216–289; it reads KKVVKKPKDN…TDSIALRPLV (74 aa). Residues 228-251 are disordered; sequence LPPAARRQDPQEMEDYPGHNTAAP.

Monomer and homodimer. Interacts with TRAF1, TRAF2 and TRAF6. Interacts with TRAF3 and TRAF5. Interacts with TRAF6 and MAP3K8; the interaction is required for ERK activation.

Its subcellular location is the cell membrane. The protein localises to the secreted. In terms of biological role, receptor for TNFSF5/CD40LG. Transduces TRAF6- and MAP3K8-mediated signals that activate ERK in macrophages and B cells, leading to induction of immunoglobulin secretion. This chain is Tumor necrosis factor receptor superfamily member 5 (Cd40), found in Mus musculus (Mouse).